A 200-amino-acid chain; its full sequence is Riboflavin synthase (200 aa).

Lumazine-binding repeat units lie at residues 1–97 (MFSG…IGGH) and 98–190 (LLSG…VDTV). Residues 4–6 (GII), 48–50 (CLT), 62–67 (DVIPET), 101–103 (GHV), K132, 141–143 (SLT), and 155–160 (GLIPET) contribute to the 2,4-dihydroxypteridine site.

Homotrimer.

It catalyses the reaction 2 6,7-dimethyl-8-(1-D-ribityl)lumazine + H(+) = 5-amino-6-(D-ribitylamino)uracil + riboflavin. It participates in cofactor biosynthesis; riboflavin biosynthesis; riboflavin from 2-hydroxy-3-oxobutyl phosphate and 5-amino-6-(D-ribitylamino)uracil: step 2/2. Catalyzes the dismutation of two molecules of 6,7-dimethyl-8-ribityllumazine, resulting in the formation of riboflavin and 5-amino-6-(D-ribitylamino)uracil. In Chlamydia pneumoniae (Chlamydophila pneumoniae), this protein is Riboflavin synthase (ribE).